The following is a 113-amino-acid chain: Large ribosomal subunit protein uL22 (113 aa).

Belongs to the universal ribosomal protein uL22 family. Part of the 50S ribosomal subunit.

This protein binds specifically to 23S rRNA; its binding is stimulated by other ribosomal proteins, e.g. L4, L17, and L20. It is important during the early stages of 50S assembly. It makes multiple contacts with different domains of the 23S rRNA in the assembled 50S subunit and ribosome. Functionally, the globular domain of the protein is located near the polypeptide exit tunnel on the outside of the subunit, while an extended beta-hairpin is found that lines the wall of the exit tunnel in the center of the 70S ribosome. This is Large ribosomal subunit protein uL22 from Roseiflexus sp. (strain RS-1).